Reading from the N-terminus, the 871-residue chain is Phosphoinositide 3-kinase regulatory subunit 5 (871 aa).

M1 carries the post-translational modification N-acetylmethionine. The interval S25–L101 is heterodimerization. The tract at residues M381–K413 is disordered. S451 and S500 each carry phosphoserine. The tract at residues P646–S746 is interaction with beta-gamma G protein dimers.

As to quaternary structure, heterodimer of a catalytic subunit (PIK3CG/p120) and a regulatory (PIK3R5a/p101) subunit. Interacts with beta-gamma G protein dimers.

Its subcellular location is the nucleus. The protein resides in the cytoplasm. It localises to the cell membrane. With respect to regulation, greatly activated by G gamma proteins. Its function is as follows. Regulatory subunit of the PI3K gamma complex. Required for recruitment of the catalytic subunit to the plasma membrane via interaction with beta-gamma G protein dimers. Required for G protein-mediated activation of PIK3CG. The polypeptide is Phosphoinositide 3-kinase regulatory subunit 5 (Pik3r5) (Mus musculus (Mouse)).